The following is a 153-amino-acid chain: Pheromone-binding protein Gp-9 (153 aa).

A signal peptide spans methionine 1–alanine 19. Intrachain disulfides connect cysteine 37/cysteine 77, cysteine 73/cysteine 129, and cysteine 118/cysteine 138.

It belongs to the PBP/GOBP family. Homodimer.

Its subcellular location is the secreted. In terms of biological role, colony queen number, a major feature of social organization, is associated with worker genotype for Gp-9. Colonies are headed by either a single reproductive queen (monogyne form) or multiple queens (polygyne form). Differences in worker Gp-9 genotypes between social forms may cause differences in workers' abilities to recognize queens and regulate their numbers. This Solenopsis invicta (Red imported fire ant) protein is Pheromone-binding protein Gp-9.